The following is an 87-amino-acid chain: MANHKSAIKRHKQSVKRAARNRAVKTRIKNAIKAVRTAVTEKDKEQAQAKLTDAMSVLDKASSKGVIHWKNAARKISRLSKAVDGIE.

The segment at Met-1–Ala-23 is disordered.

The protein belongs to the bacterial ribosomal protein bS20 family.

Its function is as follows. Binds directly to 16S ribosomal RNA. This chain is Small ribosomal subunit protein bS20, found in Oleidesulfovibrio alaskensis (strain ATCC BAA-1058 / DSM 17464 / G20) (Desulfovibrio alaskensis).